Consider the following 380-residue polypeptide: Glucose-1-phosphate adenylyltransferase (380 aa).

Alpha-D-glucose 1-phosphate contacts are provided by residues tyrosine 100, glycine 165, 180–181 (EK), and serine 191.

This sequence belongs to the bacterial/plant glucose-1-phosphate adenylyltransferase family. In terms of assembly, homotetramer.

It carries out the reaction alpha-D-glucose 1-phosphate + ATP + H(+) = ADP-alpha-D-glucose + diphosphate. The protein operates within glycan biosynthesis; glycogen biosynthesis. Involved in the biosynthesis of ADP-glucose, a building block required for the elongation reactions to produce glycogen. Catalyzes the reaction between ATP and alpha-D-glucose 1-phosphate (G1P) to produce pyrophosphate and ADP-Glc. The chain is Glucose-1-phosphate adenylyltransferase from Clostridium acetobutylicum (strain ATCC 824 / DSM 792 / JCM 1419 / IAM 19013 / LMG 5710 / NBRC 13948 / NRRL B-527 / VKM B-1787 / 2291 / W).